The sequence spans 104 residues: Sweet protein mabinlin-1 (104 aa).

4 disulfide bridges follow: Cys4/Cys53, Cys17/Cys42, Cys43/Cys91, and Cys55/Cys99.

It belongs to the 2S seed storage albumins family. As to quaternary structure, heterodimer of a small A and a large B chain linked by disulfide bonds.

Functionally, 2S seed storage protein having sweetness-inducing activity. This form is not heat stable. The protein is Sweet protein mabinlin-1 of Capparis masaikai (Mabinlang).